The chain runs to 394 residues: Flap endonuclease 1 (394 aa).

The segment at 1–104 (MGIKQLFTII…GELARRYQRK (104 aa)) is N-domain. A Mg(2+)-binding site is contributed by aspartate 34. DNA is bound by residues arginine 47 and arginine 70. Residues aspartate 86, glutamate 158, glutamate 160, aspartate 179, and aspartate 181 each coordinate Mg(2+). An I-domain region spans residues 122-253 (DVEKFSRRTV…STALKLIREH (132 aa)). Position 158 (glutamate 158) interacts with DNA. Glycine 231 and aspartate 233 together coordinate DNA. Aspartate 233 serves as a coordination point for Mg(2+). The interval 340 to 348 (QQQRLEGFF) is interaction with PCNA. The disordered stretch occupies residues 358-394 (QKAHKRKLEVKAEEAKKKLKAEKKEKAKAKARPRGTA). The segment covering 374–394 (KKLKAEKKEKAKAKARPRGTA) has biased composition (basic residues).

It belongs to the XPG/RAD2 endonuclease family. FEN1 subfamily. In terms of assembly, interacts with PCNA. Three molecules of FEN1 bind to one PCNA trimer with each molecule binding to one PCNA monomer. PCNA stimulates the nuclease activity without altering cleavage specificity. Mg(2+) serves as cofactor. Post-translationally, phosphorylated. Phosphorylation upon DNA damage induces relocalization to the nuclear plasma.

The protein localises to the nucleus. The protein resides in the nucleolus. It is found in the nucleoplasm. It localises to the mitochondrion. In terms of biological role, structure-specific nuclease with 5'-flap endonuclease and 5'-3' exonuclease activities involved in DNA replication and repair. During DNA replication, cleaves the 5'-overhanging flap structure that is generated by displacement synthesis when DNA polymerase encounters the 5'-end of a downstream Okazaki fragment. It enters the flap from the 5'-end and then tracks to cleave the flap base, leaving a nick for ligation. Also involved in the long patch base excision repair (LP-BER) pathway, by cleaving within the apurinic/apyrimidinic (AP) site-terminated flap. Acts as a genome stabilization factor that prevents flaps from equilibrating into structures that lead to duplications and deletions. Also possesses 5'-3' exonuclease activity on nicked or gapped double-stranded DNA, and exhibits RNase H activity. Also involved in replication and repair of rDNA and in repairing mitochondrial DNA. The protein is Flap endonuclease 1 of Pyricularia oryzae (strain 70-15 / ATCC MYA-4617 / FGSC 8958) (Rice blast fungus).